The chain runs to 350 residues: Nicotinate-nucleotide--dimethylbenzimidazole phosphoribosyltransferase (350 aa).

The active-site Proton acceptor is the E316.

This sequence belongs to the CobT family.

It catalyses the reaction 5,6-dimethylbenzimidazole + nicotinate beta-D-ribonucleotide = alpha-ribazole 5'-phosphate + nicotinate + H(+). It functions in the pathway nucleoside biosynthesis; alpha-ribazole biosynthesis; alpha-ribazole from 5,6-dimethylbenzimidazole: step 1/2. Catalyzes the synthesis of alpha-ribazole-5'-phosphate from nicotinate mononucleotide (NAMN) and 5,6-dimethylbenzimidazole (DMB). The sequence is that of Nicotinate-nucleotide--dimethylbenzimidazole phosphoribosyltransferase from Pseudomonas savastanoi pv. phaseolicola (strain 1448A / Race 6) (Pseudomonas syringae pv. phaseolicola (strain 1448A / Race 6)).